The primary structure comprises 118 residues: Large ribosomal subunit protein bL20 (118 aa).

It belongs to the bacterial ribosomal protein bL20 family.

In terms of biological role, binds directly to 23S ribosomal RNA and is necessary for the in vitro assembly process of the 50S ribosomal subunit. It is not involved in the protein synthesizing functions of that subunit. The protein is Large ribosomal subunit protein bL20 of Enterobacter sp. (strain 638).